The primary structure comprises 332 residues: Putative ankyrin repeat protein R896 (332 aa).

5 ANK repeats span residues 159–188 (GNDN…NVKS), 190–218 (DNCA…NVKA), 219–248 (DGNY…DIKA), 249–278 (AQNL…NIST), and 280–308 (NDYV…DIFS).

This Acanthamoeba polyphaga mimivirus (APMV) protein is Putative ankyrin repeat protein R896.